The primary structure comprises 812 residues: Probable inorganic carbon transporter subunit DabA (812 aa).

Zn(2+) is bound by residues C338, D340, H498, and C513.

It belongs to the inorganic carbon transporter (TC 9.A.2) DabA family. In terms of assembly, forms a complex with DabB. Requires Zn(2+) as cofactor.

Its subcellular location is the cell inner membrane. Functionally, part of an energy-coupled inorganic carbon pump. This Methylobacterium sp. (strain 4-46) protein is Probable inorganic carbon transporter subunit DabA.